The primary structure comprises 241 residues: Ribonuclease PH (241 aa).

Residues Arg89 and 127–129 (GTR) each bind phosphate.

This sequence belongs to the RNase PH family. Homohexameric ring arranged as a trimer of dimers.

The catalysed reaction is tRNA(n+1) + phosphate = tRNA(n) + a ribonucleoside 5'-diphosphate. Functionally, phosphorolytic 3'-5' exoribonuclease that plays an important role in tRNA 3'-end maturation. Removes nucleotide residues following the 3'-CCA terminus of tRNAs; can also add nucleotides to the ends of RNA molecules by using nucleoside diphosphates as substrates, but this may not be physiologically important. Probably plays a role in initiation of 16S rRNA degradation (leading to ribosome degradation) during starvation. The sequence is that of Ribonuclease PH from Stenotrophomonas maltophilia (strain K279a).